A 774-amino-acid chain; its full sequence is RNA exonuclease 5 (774 aa).

The segment covering Met-1–Arg-19 has biased composition (basic and acidic residues). Positions Met-1–Pro-22 are disordered. The Exonuclease domain maps to Leu-228–Ala-376. 2 consecutive RRM domains span residues Ser-505 to Thr-579 and Gly-600 to His-679.

In Homo sapiens (Human), this protein is RNA exonuclease 5.